The primary structure comprises 241 residues: Transcription initiation factor TFIID subunit 14 (241 aa).

In terms of domain architecture, YEATS spans 1-137 (MTTVKRTVRL…PGLLKALTAT (137 aa)). The disordered stretch occupies residues 141–169 (PGYSDEGEEARKDKRKNESEVGAGKKKAK). Positions 149–159 (EARKDKRKNES) are enriched in basic and acidic residues.

The protein belongs to the TAF14 family. In terms of assembly, component of the fcp1/TFIIF/polII complex via interaction of tfg3 with both tfg1/TFIIF-alpha and tfg2/TFIIF-beta subunits. Component of the SWI/SNF global transcription activator complex composed of at least arp9, arp42, snf5, snf22, snf30, sbf59, sol1, ssr1, ssr2, ssr3, ssr4 and tfg3. Also interacts with the TATA-binding protein (TBP). Component of the mst2 complex composed of at least eaf6, mst2, nto1, pdp3, ptf1, ptf2 and tfg3.

The protein resides in the nucleus. It localises to the nucleoplasm. Its function is as follows. Functions as a component of the DNA-binding general transcription factor complex TFIID, and the RNA polymerase II associated general transcription factor complex TFIIF. Binding of TFIID to a promoter (with or without TATA element) is the initial step in preinitiation complex (PIC) formation. TFIID plays a key role in the regulation of gene expression by RNA polymerase II through different activities such as transcription activator interaction, core promoter recognition and selectivity, TFIIA and TFIIB interaction, facilitation of DNA opening and initiation of transcription. TFIIF is essential for the initiation of transcription by RNA polymerase II. TFIIF functions include the recruitment of RNA polymerase II to the promoter bound DNA-TBP-TFIIB complex, decreasing the affinity of RNA polymerase II for non-specific DNA, allowing for the subsequent recruitment of TFIIE and TFIIH, and facilitating RNA polymerase II elongation. The TAF14 subunit has stimulatory activity. Component of the SWI/SNF complex, an ATP-dependent chromatin remodeling complex, required for the positive and negative regulation of gene expression of a large number of genes. It changes chromatin structure by altering DNA-histone contacts within a nucleosome, leading eventually to a change in nucleosome position, thus facilitating or repressing binding of gene-specific transcription factors. Component of the mst2 complex which is a highly specific H3 lysine 14 (H3K14) acetyltransferase that functions together with gcn5 to regulate global levels of H3K14 acetylation (H3K14ac), critical for DNA damage checkpoint activation. This Schizosaccharomyces pombe (strain 972 / ATCC 24843) (Fission yeast) protein is Transcription initiation factor TFIID subunit 14 (tfg3).